Here is a 461-residue protein sequence, read N- to C-terminus: Cytochrome c biogenesis protein CcsB (461 aa).

3 helical membrane-spanning segments follow: residues 32-52, 91-111, and 178-198; these read LRLA…GTVI, TWWF…CTFT, and IGPI…IWGA.

The protein belongs to the Ccs1/CcsB family. As to quaternary structure, may interact with CcsA.

Its subcellular location is the cellular thylakoid membrane. In terms of biological role, required during biogenesis of c-type cytochromes (cytochrome c6 and cytochrome f) at the step of heme attachment. The protein is Cytochrome c biogenesis protein CcsB of Trichormus variabilis (strain ATCC 29413 / PCC 7937) (Anabaena variabilis).